The primary structure comprises 215 residues: Cytidylate kinase (215 aa).

10–18 (GPAASGKGT) contacts ATP.

The protein belongs to the cytidylate kinase family. Type 1 subfamily.

Its subcellular location is the cytoplasm. It catalyses the reaction CMP + ATP = CDP + ADP. The catalysed reaction is dCMP + ATP = dCDP + ADP. The sequence is that of Cytidylate kinase from Bartonella tribocorum (strain CIP 105476 / IBS 506).